The primary structure comprises 153 residues: Transcriptional repressor NrdR (153 aa).

Residues 3 to 34 (CPFCGYEDTRVLDSRELSEGRAIRRRRECPQC) fold into a zinc finger. One can recognise an ATP-cone domain in the interval 49 to 139 (ITVIKKDGRR…VYKDFREIDQ (91 aa)).

This sequence belongs to the NrdR family. It depends on Zn(2+) as a cofactor.

In terms of biological role, negatively regulates transcription of bacterial ribonucleotide reductase nrd genes and operons by binding to NrdR-boxes. The protein is Transcriptional repressor NrdR of Fervidobacterium nodosum (strain ATCC 35602 / DSM 5306 / Rt17-B1).